Consider the following 142-residue polypeptide: Large ribosomal subunit protein uL13 (142 aa).

It belongs to the universal ribosomal protein uL13 family. As to quaternary structure, part of the 50S ribosomal subunit.

Its function is as follows. This protein is one of the early assembly proteins of the 50S ribosomal subunit, although it is not seen to bind rRNA by itself. It is important during the early stages of 50S assembly. The protein is Large ribosomal subunit protein uL13 of Buchnera aphidicola subsp. Cinara cedri (strain Cc).